Reading from the N-terminus, the 448-residue chain is Asparagine--tRNA ligase (448 aa).

Belongs to the class-II aminoacyl-tRNA synthetase family. In terms of assembly, homodimer.

The protein localises to the cytoplasm. The catalysed reaction is tRNA(Asn) + L-asparagine + ATP = L-asparaginyl-tRNA(Asn) + AMP + diphosphate + H(+). This Streptococcus pyogenes serotype M12 (strain MGAS9429) protein is Asparagine--tRNA ligase.